Consider the following 352-residue polypeptide: Alanine racemase (352 aa).

K33 serves as the catalytic Proton acceptor; specific for D-alanine. Position 33 is an N6-(pyridoxal phosphate)lysine (K33). A substrate-binding site is contributed by R129. Y250 (proton acceptor; specific for L-alanine) is an active-site residue. A substrate-binding site is contributed by M298.

This sequence belongs to the alanine racemase family. Pyridoxal 5'-phosphate is required as a cofactor.

It catalyses the reaction L-alanine = D-alanine. It participates in amino-acid biosynthesis; D-alanine biosynthesis; D-alanine from L-alanine: step 1/1. In terms of biological role, catalyzes the interconversion of L-alanine and D-alanine. May also act on other amino acids. The protein is Alanine racemase (alr) of Neisseria gonorrhoeae (strain ATCC 700825 / FA 1090).